A 71-amino-acid chain; its full sequence is Protein SlyX homolog (71 aa).

The protein belongs to the SlyX family.

The sequence is that of Protein SlyX homolog from Thioalkalivibrio sulfidiphilus (strain HL-EbGR7).